We begin with the raw amino-acid sequence, 305 residues long: tRNA pseudouridine synthase B (305 aa).

Asp-39 functions as the Nucleophile in the catalytic mechanism.

This sequence belongs to the pseudouridine synthase TruB family. Type 1 subfamily.

The catalysed reaction is uridine(55) in tRNA = pseudouridine(55) in tRNA. In terms of biological role, responsible for synthesis of pseudouridine from uracil-55 in the psi GC loop of transfer RNAs. The sequence is that of tRNA pseudouridine synthase B from Staphylococcus saprophyticus subsp. saprophyticus (strain ATCC 15305 / DSM 20229 / NCIMB 8711 / NCTC 7292 / S-41).